Here is a 208-residue protein sequence, read N- to C-terminus: ATP-dependent Clp protease proteolytic subunit (208 aa).

Ser-101 serves as the catalytic Nucleophile. Residue His-126 is part of the active site.

This sequence belongs to the peptidase S14 family. In terms of assembly, component of the chloroplastic Clp protease core complex.

Its subcellular location is the plastid. It localises to the chloroplast stroma. The catalysed reaction is Hydrolysis of proteins to small peptides in the presence of ATP and magnesium. alpha-casein is the usual test substrate. In the absence of ATP, only oligopeptides shorter than five residues are hydrolyzed (such as succinyl-Leu-Tyr-|-NHMec, and Leu-Tyr-Leu-|-Tyr-Trp, in which cleavage of the -Tyr-|-Leu- and -Tyr-|-Trp bonds also occurs).. Cleaves peptides in various proteins in a process that requires ATP hydrolysis. Has a chymotrypsin-like activity. Plays a major role in the degradation of misfolded proteins. The protein is ATP-dependent Clp protease proteolytic subunit of Nephroselmis olivacea (Green alga).